Here is a 441-residue protein sequence, read N- to C-terminus: Adenylyltransferase and sulfurtransferase MOCS3 (441 aa).

Residues Gly83, Asp104, 111–115, Lys128, and 172–173 contribute to the ATP site; these read TNLHR and DN. Zn(2+) contacts are provided by Cys213 and Cys216. The Glycyl thioester intermediate; for adenylyltransferase activity role is filled by Cys230. 2 residues coordinate Zn(2+): Cys288 and Cys291. Positions 339–439 constitute a Rhodanese domain; the sequence is AGRDHLLVDV…WTKTIDPNFP (101 aa). The Cysteine persulfide intermediate; for sulfurtransferase activity role is filled by Cys395.

In the N-terminal section; belongs to the HesA/MoeB/ThiF family. UBA4 subfamily. Zn(2+) is required as a cofactor.

The protein localises to the cytoplasm. It carries out the reaction [molybdopterin-synthase sulfur-carrier protein]-C-terminal Gly-Gly + ATP + H(+) = [molybdopterin-synthase sulfur-carrier protein]-C-terminal Gly-Gly-AMP + diphosphate. It catalyses the reaction [molybdopterin-synthase sulfur-carrier protein]-C-terminal Gly-Gly-AMP + S-sulfanyl-L-cysteinyl-[cysteine desulfurase] + AH2 = [molybdopterin-synthase sulfur-carrier protein]-C-terminal-Gly-aminoethanethioate + L-cysteinyl-[cysteine desulfurase] + A + AMP + 2 H(+). It participates in tRNA modification; 5-methoxycarbonylmethyl-2-thiouridine-tRNA biosynthesis. Its pathway is cofactor biosynthesis; molybdopterin biosynthesis. Functionally, plays a central role in 2-thiolation of mcm(5)S(2)U at tRNA wobble positions of cytosolic tRNA(Lys), tRNA(Glu) and tRNA(Gln). Also essential during biosynthesis of the molybdenum cofactor. Acts by mediating the C-terminal thiocarboxylation of sulfur carriers URM1 and MOCS2A. Its N-terminus first activates URM1 and MOCS2A as acyl-adenylates (-COAMP), then the persulfide sulfur on the catalytic cysteine is transferred to URM1 and MOCS2A to form thiocarboxylation (-COSH) of their C-terminus. The reaction probably involves hydrogen sulfide that is generated from the persulfide intermediate and that acts as a nucleophile towards URM1 and MOCS2A. Subsequently, a transient disulfide bond is formed. Does not use thiosulfate as sulfur donor; NFS1 probably acting as a sulfur donor for thiocarboxylation reactions. In Anopheles gambiae (African malaria mosquito), this protein is Adenylyltransferase and sulfurtransferase MOCS3.